Consider the following 109-residue polypeptide: Small ribosomal subunit protein bS16 (109 aa).

The segment at 87 to 109 (ALRETPKKSAPKAKAQERAKAAG) is disordered. Residues 100–109 (KAQERAKAAG) show a composition bias toward basic and acidic residues.

Belongs to the bacterial ribosomal protein bS16 family.

In Rhodospirillum centenum (strain ATCC 51521 / SW), this protein is Small ribosomal subunit protein bS16.